Reading from the N-terminus, the 96-residue chain is Cell division protein FtsB (96 aa).

The Cytoplasmic segment spans residues 1–11; it reads MDIKSNSFFYI. The helical transmembrane segment at 12–29 threads the bilayer; the sequence is FISVVLLLIAILQYDLWF. The Periplasmic segment spans residues 30–96; sequence SNTGFIKYQA…KQGEVFYSVK (67 aa).

The protein belongs to the FtsB family. In terms of assembly, part of a complex composed of FtsB, FtsL and FtsQ.

It is found in the cell inner membrane. Essential cell division protein. May link together the upstream cell division proteins, which are predominantly cytoplasmic, with the downstream cell division proteins, which are predominantly periplasmic. In Francisella tularensis subsp. tularensis (strain SCHU S4 / Schu 4), this protein is Cell division protein FtsB.